Consider the following 695-residue polypeptide: Tail-specific protease (695 aa).

Positions 1 to 29 (MVMKFKMSKNVICYTWLSVCLSSAIPAFA) are cleaved as a signal peptide. The region spanning 256–316 (IGTTLQSEDD…RLEDLVEKIK (61 aa)) is the PDZ domain. Residues S459, D470, and K484 each act as charge relay system in the active site.

It belongs to the peptidase S41A family.

Its subcellular location is the cell inner membrane. The enzyme catalyses The enzyme shows specific recognition of a C-terminal tripeptide, Xaa-Yaa-Zaa, in which Xaa is preferably Ala or Leu, Yaa is preferably Ala or Tyr, and Zaa is preferably Ala, but then cleaves at a variable distance from the C-terminus. A typical cleavage is -Ala-Ala-|-Arg-Ala-Ala-Lys-Glu-Asn-Tyr-Ala-Leu-Ala-Ala.. Functionally, involved in the cleavage of a C-terminal peptide of 11 residues from the precursor form of penicillin-binding protein 3 (PBP3). May be involved in protection of the bacterium from thermal and osmotic stresses. The chain is Tail-specific protease (prc) from Haemophilus influenzae (strain ATCC 51907 / DSM 11121 / KW20 / Rd).